We begin with the raw amino-acid sequence, 282 residues long: Glycine/sarcosine N-methyltransferase (282 aa).

Residues 1 to 23 (MTSTQNHPLQTQDDQQRFGQSPE) are compositionally biased toward polar residues. The disordered stretch occupies residues 1–27 (MTSTQNHPLQTQDDQQRFGQSPESVRE). S-adenosyl-L-methionine contacts are provided by residues Tyr-35, Trp-43, Arg-52, Ala-76, Asp-97, 123-124 (DW), and Leu-141. Substrate is bound by residues Asn-143, Arg-176, and Tyr-217.

It belongs to the class I-like SAM-binding methyltransferase superfamily. Glycine N-methyltransferase family. In terms of assembly, monomer.

It catalyses the reaction glycine + 2 S-adenosyl-L-methionine = N,N-dimethylglycine + 2 S-adenosyl-L-homocysteine + 2 H(+). It carries out the reaction glycine + S-adenosyl-L-methionine = sarcosine + S-adenosyl-L-homocysteine + H(+). The enzyme catalyses sarcosine + S-adenosyl-L-methionine = N,N-dimethylglycine + S-adenosyl-L-homocysteine + H(+). The protein operates within amine and polyamine biosynthesis; betaine biosynthesis via glycine pathway; betaine from glycine: step 1/3. Its pathway is amine and polyamine biosynthesis; betaine biosynthesis via glycine pathway; betaine from glycine: step 2/3. Its function is as follows. Catalyzes the methylation of glycine and sarcosine to sarcosine and dimethylglycine, respectively, with S-adenosylmethionine (AdoMet) acting as the methyl donor. It has strict specificity for glycine and sarcosine as the methyl group acceptors. This chain is Glycine/sarcosine N-methyltransferase, found in Parasynechococcus marenigrum (strain WH8102).